Here is a 211-residue protein sequence, read N- to C-terminus: Endo-1,4-beta-xylanase 3 (211 aa).

The signal sequence occupies residues 1 to 27 (MKVTAAFAGLLVTAFAAPVPEPVLVSR). Positions 28–210 (SAGINYVQNY…GAGSASVTIS (183 aa)) constitute a GH11 domain. Catalysis depends on glutamate 106, which acts as the Nucleophile. Cysteine 119 and cysteine 138 are joined by a disulfide. The Proton donor role is filled by glutamate 197.

Belongs to the glycosyl hydrolase 11 (cellulase G) family.

The protein localises to the secreted. The enzyme catalyses Endohydrolysis of (1-&gt;4)-beta-D-xylosidic linkages in xylans.. It participates in glycan degradation; xylan degradation. The chain is Endo-1,4-beta-xylanase 3 (xynC) from Aspergillus kawachii (strain NBRC 4308) (White koji mold).